Consider the following 78-residue polypeptide: Acyl carrier protein (78 aa).

Positions 2–77 constitute a Carrier domain; it reads SDTEERVKKI…DAVKFIDKAS (76 aa). O-(pantetheine 4'-phosphoryl)serine is present on Ser37.

The protein belongs to the acyl carrier protein (ACP) family. 4'-phosphopantetheine is transferred from CoA to a specific serine of apo-ACP by AcpS. This modification is essential for activity because fatty acids are bound in thioester linkage to the sulfhydryl of the prosthetic group.

It localises to the cytoplasm. It functions in the pathway lipid metabolism; fatty acid biosynthesis. Functionally, carrier of the growing fatty acid chain in fatty acid biosynthesis. The protein is Acyl carrier protein of Bartonella bacilliformis (strain ATCC 35685 / KC583 / Herrer 020/F12,63).